We begin with the raw amino-acid sequence, 233 residues long: MLSVSGLTKRYGDERALDDVSVDLQRGELTVLVGRSGAGKTTLLRCLDGLEQPDDGTIELDGRAPATTDVALVFQAGALVDSKSALSNVLDGALGRLPSWRELLGVYPADEKRAAIARLHDVGLGGYADRRVGTLSGGQRQRVGIARALQQEPAVLLADEPVASLDPETGRDVLERVAAVVRDDDLIGVVSLHQPRLAEPIADRYLGLADGRLVLDRPAAALDREDITAVYDD.

The ABC transporter domain maps to 2-227 (LSVSGLTKRY…PAAALDREDI (226 aa)). Residue 34-41 (GRSGAGKT) coordinates ATP.

Belongs to the ABC transporter superfamily. Phosphonates importer (TC 3.A.1.9.1) family. In terms of assembly, the complex is composed of two ATP-binding proteins (PhnC), two transmembrane proteins (PhnE) and a solute-binding protein (PhnD).

The protein resides in the cell membrane. It carries out the reaction phosphonate(out) + ATP + H2O = phosphonate(in) + ADP + phosphate + H(+). Its function is as follows. Part of the ABC transporter complex PhnCDE involved in phosphonates import. Responsible for energy coupling to the transport system. In Natronomonas pharaonis (strain ATCC 35678 / DSM 2160 / CIP 103997 / JCM 8858 / NBRC 14720 / NCIMB 2260 / Gabara) (Halobacterium pharaonis), this protein is Phosphonates import ATP-binding protein PhnC 1.